Consider the following 287-residue polypeptide: Homoserine kinase (287 aa).

Residue 79–89 (PLARGLGSSSS) coordinates ATP.

The protein belongs to the GHMP kinase family. Homoserine kinase subfamily.

The protein resides in the cytoplasm. The catalysed reaction is L-homoserine + ATP = O-phospho-L-homoserine + ADP + H(+). It functions in the pathway amino-acid biosynthesis; L-threonine biosynthesis; L-threonine from L-aspartate: step 4/5. In terms of biological role, catalyzes the ATP-dependent phosphorylation of L-homoserine to L-homoserine phosphate. The chain is Homoserine kinase from Enterococcus faecalis (strain ATCC 700802 / V583).